The sequence spans 432 residues: Ribosomal protein uS12 methylthiotransferase RimO (432 aa).

The MTTase N-terminal domain occupies 4–122; it reads KTIDIITLGC…LLQDLGKAYH (119 aa). Positions 13, 51, 85, 146, 150, and 153 each coordinate [4Fe-4S] cluster. One can recognise a Radical SAM core domain in the interval 132-363; it reads TTPKHYAYLK…MAIQQGISTE (232 aa). The TRAM domain maps to 366–432; the sequence is ASKVGQKMKV…DEFDLFGEII (67 aa).

This sequence belongs to the methylthiotransferase family. RimO subfamily. It depends on [4Fe-4S] cluster as a cofactor.

The protein localises to the cytoplasm. It catalyses the reaction L-aspartate(89)-[ribosomal protein uS12]-hydrogen + (sulfur carrier)-SH + AH2 + 2 S-adenosyl-L-methionine = 3-methylsulfanyl-L-aspartate(89)-[ribosomal protein uS12]-hydrogen + (sulfur carrier)-H + 5'-deoxyadenosine + L-methionine + A + S-adenosyl-L-homocysteine + 2 H(+). Its function is as follows. Catalyzes the methylthiolation of an aspartic acid residue of ribosomal protein uS12. In Bacteroides fragilis (strain ATCC 25285 / DSM 2151 / CCUG 4856 / JCM 11019 / LMG 10263 / NCTC 9343 / Onslow / VPI 2553 / EN-2), this protein is Ribosomal protein uS12 methylthiotransferase RimO.